A 442-amino-acid polypeptide reads, in one-letter code: Exodeoxyribonuclease 7 large subunit (442 aa).

Belongs to the XseA family. As to quaternary structure, heterooligomer composed of large and small subunits.

The protein localises to the cytoplasm. The catalysed reaction is Exonucleolytic cleavage in either 5'- to 3'- or 3'- to 5'-direction to yield nucleoside 5'-phosphates.. In terms of biological role, bidirectionally degrades single-stranded DNA into large acid-insoluble oligonucleotides, which are then degraded further into small acid-soluble oligonucleotides. This is Exodeoxyribonuclease 7 large subunit from Shewanella woodyi (strain ATCC 51908 / MS32).